We begin with the raw amino-acid sequence, 76 residues long: Conotoxin Cal5a L3 (76 aa).

Residues 1 to 22 (MRFYIGLMAALMLTSVLRTDSA) form the signal peptide. The propeptide occupies 23–42 (SVGQTGTKSELAVIERVIRQ). 4-hydroxyproline is present on Pro-50. Residues Pro-58, Pro-62, and Pro-64 each carry the 4-hydroxyproline; partial modification.

It belongs to the conotoxin T superfamily. Post-translationally, contains 2 disulfide bonds that can be either 'C1-C3, C2-C4' or 'C1-C4, C2-C3', since these disulfide connectivities have been observed for conotoxins with cysteine framework V (for examples, see AC P0DQQ7 and AC P81755). As to expression, expressed by the venom duct.

The protein resides in the secreted. Its function is as follows. Probable neurotoxin with unknown target. Possibly targets ion channels. This is Conotoxin Cal5a L3 from Californiconus californicus (California cone).